The chain runs to 415 residues: Histidine--tRNA ligase (415 aa).

The protein belongs to the class-II aminoacyl-tRNA synthetase family. Homodimer.

The protein resides in the cytoplasm. It catalyses the reaction tRNA(His) + L-histidine + ATP = L-histidyl-tRNA(His) + AMP + diphosphate + H(+). The protein is Histidine--tRNA ligase of Clostridium botulinum (strain ATCC 19397 / Type A).